The chain runs to 360 residues: Peptide chain release factor 1 (360 aa).

Gln-235 is subject to N5-methylglutamine.

Belongs to the prokaryotic/mitochondrial release factor family. Methylated by PrmC. Methylation increases the termination efficiency of RF1.

Its subcellular location is the cytoplasm. Functionally, peptide chain release factor 1 directs the termination of translation in response to the peptide chain termination codons UAG and UAA. The polypeptide is Peptide chain release factor 1 (Burkholderia mallei (strain NCTC 10247)).